A 762-amino-acid polypeptide reads, in one-letter code: Poly(A) RNA polymerase CID14 (762 aa).

The interval 1–123 (MPTGFQPAES…KKEEQKAAER (123 aa)) is disordered. Residues 50–62 (KKNKKDKKKKGSK) are compositionally biased toward basic residues. 2 stretches are compositionally biased toward basic and acidic residues: residues 65–75 (QPVDEPDKKDG) and 99–123 (RKRD…AAER). Ser189 contributes to the ATP binding site. Mg(2+) contacts are provided by Asp200 and Asp202. Residues Gly266, Lys291, Ser309, and Tyr310 each coordinate ATP. The PAP-associated domain occupies 336–393 (NLGTLLIEFFELFGRNFNYNDVGISIRRGGFYFSKASRGWMKGQSFLLSIEDPQDKDN). The segment at 482–762 (SIPLGADPKP…LGQSSGDMSD (281 aa)) is disordered. Over residues 536 to 549 (VEDDELESDDDSDS) the composition is skewed to acidic residues. A compositionally biased stretch (polar residues) spans 572 to 581 (RTANSRSTSR). Lys610 contributes to the ATP binding site. Composition is skewed to acidic residues over residues 677–687 (GEEEEEIDSDE) and 697–707 (SDGDLGSEDEI). A compositionally biased stretch (polar residues) spans 753–762 (LGQSSGDMSD).

The protein belongs to the DNA polymerase type-B-like family. In terms of assembly, component of the TRAMP complex. Mg(2+) serves as cofactor. Mn(2+) is required as a cofactor.

The protein localises to the nucleus. It localises to the nucleolus. The catalysed reaction is RNA(n) + ATP = RNA(n)-3'-adenine ribonucleotide + diphosphate. Functionally, required for 3' polyadenylation of the 5.8S and 25S rRNAs as a prelude to their degradation in the exosome. Involved in the nucleolar organization to ensure faithful chromosome segregation during mitosis. In Cryptococcus neoformans var. neoformans serotype D (strain JEC21 / ATCC MYA-565) (Filobasidiella neoformans), this protein is Poly(A) RNA polymerase CID14.